The primary structure comprises 314 residues: MSKKILKDVSRNRKERPWRERKLENLQYAEYLRILNFKKANRVKECGEVLRFVADDEGRLRLYQTWFCKSRLCPLCNWRRSMGQSNQLMQVLDEAHKQRKTGRFLFLTLTAENASGENLKQEVRKMGRAISKLFQYKKPAKNLLGYVRSTEITINKNGTYHQHMHVLLFVKPTYFKDSANYINQAEWSKLWQRAMKLDYQPIVNVEAVRSNKAKGKNSLIASAQETAKYQVKSKDILTNDQERDLQVVEDLEQGLAGSRQISYGGLFKEIRKQLQLEDVDAHLINVDDDKVKIDEVVREVVAKWDYNKQNYFIW.

Tyr-229 is a binding site for DNA.

This sequence belongs to the Gram-positive plasmids replication protein type 1 family.

In terms of biological role, produces a single-strand nick in a specific site of the plasmid, and this nick results in single-strand replication by rolling circle mechanism. The polypeptide is Protein rep (rep) (Lentilactobacillus hilgardii (Lactobacillus hilgardii)).